Consider the following 157-residue polypeptide: 6,7-dimethyl-8-ribityllumazine synthase (157 aa).

Residues Phe-22, 56–58 (AFE), and 81–83 (VLI) contribute to the 5-amino-6-(D-ribitylamino)uracil site. A (2S)-2-hydroxy-3-oxobutyl phosphate-binding site is contributed by 86–87 (ET). The active-site Proton donor is His-89. Phe-114 contacts 5-amino-6-(D-ribitylamino)uracil. Arg-128 contributes to the (2S)-2-hydroxy-3-oxobutyl phosphate binding site.

This sequence belongs to the DMRL synthase family.

The enzyme catalyses (2S)-2-hydroxy-3-oxobutyl phosphate + 5-amino-6-(D-ribitylamino)uracil = 6,7-dimethyl-8-(1-D-ribityl)lumazine + phosphate + 2 H2O + H(+). The protein operates within cofactor biosynthesis; riboflavin biosynthesis; riboflavin from 2-hydroxy-3-oxobutyl phosphate and 5-amino-6-(D-ribitylamino)uracil: step 1/2. In terms of biological role, catalyzes the formation of 6,7-dimethyl-8-ribityllumazine by condensation of 5-amino-6-(D-ribitylamino)uracil with 3,4-dihydroxy-2-butanone 4-phosphate. This is the penultimate step in the biosynthesis of riboflavin. This chain is 6,7-dimethyl-8-ribityllumazine synthase, found in Chlamydia muridarum (strain MoPn / Nigg).